The sequence spans 642 residues: Threonine--tRNA ligase (642 aa).

A TGS domain is found at 1–61 (MPVIRFYDGS…REDAFIEFVD (61 aa)). The segment at 243-534 (DHRKIGKFLQ…LIEECSGNLP (292 aa)) is catalytic. Zn(2+)-binding residues include Cys-334, His-385, and His-511.

This sequence belongs to the class-II aminoacyl-tRNA synthetase family. As to quaternary structure, homodimer. Zn(2+) is required as a cofactor.

It localises to the cytoplasm. It carries out the reaction tRNA(Thr) + L-threonine + ATP = L-threonyl-tRNA(Thr) + AMP + diphosphate + H(+). Its function is as follows. Catalyzes the attachment of threonine to tRNA(Thr) in a two-step reaction: L-threonine is first activated by ATP to form Thr-AMP and then transferred to the acceptor end of tRNA(Thr). Also edits incorrectly charged L-seryl-tRNA(Thr). This chain is Threonine--tRNA ligase, found in Buchnera aphidicola subsp. Acyrthosiphon pisum (strain 5A).